We begin with the raw amino-acid sequence, 629 residues long: tRNA uridine 5-carboxymethylaminomethyl modification enzyme MnmG (629 aa).

FAD is bound by residues 14–19 (GAGHAG), Val-126, and Ser-181. 273–287 (GPRYCPSIEDKVVRF) serves as a coordination point for NAD(+). Gln-370 contacts FAD.

The protein belongs to the MnmG family. Homodimer. Heterotetramer of two MnmE and two MnmG subunits. FAD serves as cofactor.

The protein resides in the cytoplasm. In terms of biological role, NAD-binding protein involved in the addition of a carboxymethylaminomethyl (cmnm) group at the wobble position (U34) of certain tRNAs, forming tRNA-cmnm(5)s(2)U34. The chain is tRNA uridine 5-carboxymethylaminomethyl modification enzyme MnmG from Bacillus thuringiensis (strain Al Hakam).